A 169-amino-acid polypeptide reads, in one-letter code: Cilia- and flagella-associated protein HOATZ (169 aa).

Disordered stretches follow at residues 1–21, 52–89, and 144–169; these read METGPSEEPSGRKESQEMCPP, SQLVLRRDSSQRLPVARPRRSRGSENSHSSQSFHLASN, and KAKEHKAKKVVSESDKEDQEEVKTLD. Residues 75 to 89 show a composition bias toward polar residues; it reads SENSHSSQSFHLASN.

This sequence belongs to the HOATZ family.

Its subcellular location is the cytoplasm. The protein localises to the cell projection. It is found in the cilium. Functionally, required for motile ciliogenesis and flagellar genesis by mediating the maturation of the glycolytic enzyme ENO4. This is Cilia- and flagella-associated protein HOATZ from Homo sapiens (Human).